Reading from the N-terminus, the 92-residue chain is Small ribosomal subunit protein uS19 (92 aa).

It belongs to the universal ribosomal protein uS19 family.

Functionally, protein S19 forms a complex with S13 that binds strongly to the 16S ribosomal RNA. This chain is Small ribosomal subunit protein uS19, found in Tolumonas auensis (strain DSM 9187 / NBRC 110442 / TA 4).